The following is a 294-amino-acid chain: MKQTTIAKKVTSVGIGLHKGEPIRLTIEPSSENTGIIFYRSDLGISFKAEPKNVVNTQMATVIGNQKGYISTVEHILSAINGYGIDNIRINVDANEIPVMDGSSISFCMMLDEAGIKNLDASKKAIIIKREVEVKEGEKFVRVSPSKSPKFDYTIKFSNPIIGTQQFAFEFSRKNYVDEIARARTFGFLKDVQMLRSMNLALGGSLENAVVIDDNKILNPDGLRYENEFVRHKILDAIGDLSLLGAPILGDYTAYAASHDLNHKLTLAILTDAKNYEMVSIDEQIAHEYAKIFA.

3 residues coordinate Zn(2+): His75, His232, and Asp236. His259 serves as the catalytic Proton donor.

This sequence belongs to the LpxC family. Zn(2+) serves as cofactor.

It carries out the reaction a UDP-3-O-[(3R)-3-hydroxyacyl]-N-acetyl-alpha-D-glucosamine + H2O = a UDP-3-O-[(3R)-3-hydroxyacyl]-alpha-D-glucosamine + acetate. Its pathway is glycolipid biosynthesis; lipid IV(A) biosynthesis; lipid IV(A) from (3R)-3-hydroxytetradecanoyl-[acyl-carrier-protein] and UDP-N-acetyl-alpha-D-glucosamine: step 2/6. Catalyzes the hydrolysis of UDP-3-O-myristoyl-N-acetylglucosamine to form UDP-3-O-myristoylglucosamine and acetate, the committed step in lipid A biosynthesis. This is UDP-3-O-acyl-N-acetylglucosamine deacetylase from Campylobacter hominis (strain ATCC BAA-381 / DSM 21671 / CCUG 45161 / LMG 19568 / NCTC 13146 / CH001A).